Consider the following 530-residue polypeptide: Tyrosinase (530 aa).

Positions 1–18 (MLLAALCCLLWSFRTSTG) are cleaved as a signal peptide. At 19 to 473 (HFPRACASSK…IKPYLEQASR (455 aa)) the chain is on the lumenal, melanosome side. Asparagine 86, asparagine 111, and asparagine 161 each carry an N-linked (GlcNAc...) asparagine glycan. Residues histidine 180, histidine 202, and histidine 211 each contribute to the Cu cation site. Residues asparagine 230 and asparagine 337 are each glycosylated (N-linked (GlcNAc...) asparagine). The Cu cation site is built by histidine 363 and histidine 367. The N-linked (GlcNAc...) asparagine glycan is linked to asparagine 371. Histidine 390 is a binding site for Cu cation. Residues 474–494 (IWPWLIGAAVVGCVVTAVLGG) traverse the membrane as a helical segment. Residues 495–530 (LTSLLCRRNRKQLHEEKQPLLMEKEDYHSLLYQTHL) are Cytoplasmic-facing.

The protein belongs to the tyrosinase family. As to quaternary structure, forms an OPN3-dependent complex with DCT in response to blue light in melanocytes. Cu(2+) serves as cofactor. Glycosylated.

Its subcellular location is the melanosome membrane. It localises to the melanosome. It carries out the reaction 2 L-dopa + O2 = 2 L-dopaquinone + 2 H2O. The enzyme catalyses L-tyrosine + O2 = L-dopaquinone + H2O. It catalyses the reaction 2 5,6-dihydroxyindole-2-carboxylate + O2 = 2 indole-5,6-quinone-2-carboxylate + 2 H2O. Its function is as follows. This is a copper-containing oxidase that functions in the formation of pigments such as melanins and other polyphenolic compounds. Catalyzes the initial and rate limiting step in the cascade of reactions leading to melanin production from tyrosine. In addition to hydroxylating tyrosine to DOPA (3,4-dihydroxyphenylalanine), also catalyzes the oxidation of DOPA to DOPA-quinone, and possibly the oxidation of DHI (5,6-dihydroxyindole) to indole-5,6 quinone. The sequence is that of Tyrosinase (TYR) from Canis lupus familiaris (Dog).